Consider the following 1187-residue polypeptide: DNA-directed RNA polymerase subunit beta (1187 aa).

Belongs to the RNA polymerase beta chain family. The RNAP catalytic core consists of 2 alpha, 1 beta, 1 beta' and 1 omega subunit. When a sigma factor is associated with the core the holoenzyme is formed, which can initiate transcription.

It catalyses the reaction RNA(n) + a ribonucleoside 5'-triphosphate = RNA(n+1) + diphosphate. DNA-dependent RNA polymerase catalyzes the transcription of DNA into RNA using the four ribonucleoside triphosphates as substrates. This chain is DNA-directed RNA polymerase subunit beta, found in Petrotoga mobilis (strain DSM 10674 / SJ95).